The chain runs to 76 residues: Conopeptide X11.1 (76 aa).

Residues 1 to 20 (MMKLSVSFLLLLMLLPFITG) form the signal peptide. The propeptide occupies 21-39 (EENSDSDVLKSGAAVRQGR). 4 disulfides stabilise this stretch: C42–C56, C49–C61, C55–C66, and C60–C73.

In terms of tissue distribution, expressed by the venom duct.

The protein resides in the secreted. In terms of biological role, antimicrobial peptide that potently inhibits growth of Mycobacterium tuberculosis (H37Rv strain) (MIC=3 uM). This Conasprella ximenes (Interrupted cone) protein is Conopeptide X11.1.